Here is an 897-residue protein sequence, read N- to C-terminus: Macoilin (897 aa).

The next 4 membrane-spanning stretches (helical) occupy residues 113–133, 157–177, 181–201, and 204–224; these read ICYL…YVWI, QSWP…FLRI, PILI…PVWP, and LNAF…TVSM. Polar residues-rich tracts occupy residues 291–304 and 329–338; these read IQAA…SSKK and GNSGFNSTPP. A disordered region spans residues 291 to 375; the sequence is IQAASATPPT…DTSSSTIEDQ (85 aa). Residues 351–361 are compositionally biased toward acidic residues; the sequence is DMDDGDDSDDD. The chain crosses the membrane as a helical span at residues 379-399; it reads GGISIIRFIFSSAAWLFSFVF. Polar residues predominate over residues 403–413; that stretch reads TPSENSLSNQQ. Disordered stretches follow at residues 403–535 and 724–770; these read TPSE…QEED and NGSS…SPVP. Acidic residues predominate over residues 414 to 424; that stretch reads IDDDEDYEDGD. A compositionally biased stretch (polar residues) spans 432 to 451; sequence TDSMTSTTKGRANTMPSTTR. Low complexity-rich tracts occupy residues 452–467 and 475–490; these read SQNN…QSNG and SHQN…SNGH. Residues 503–726 adopt a coiled-coil conformation; that stretch reads DTNASNETDI…VQEFQIKNGS (224 aa). A compositionally biased stretch (basic and acidic residues) spans 510 to 535; the sequence is TDIRSMSRELESLRSEISSRRSQEED. Over residues 734 to 761 the composition is skewed to polar residues; sequence ETLMNGRSSTEANNENDTTASDQSSPHQ.

In terms of tissue distribution, strong expression in many neurons, very weak expression is also detected in others tissues.

Its subcellular location is the rough endoplasmic reticulum membrane. It localises to the nucleus membrane. Its function is as follows. Plays a role in the regulation of neuronal activity. In AWA and AWC neurons, plays a role in regulating olfactory adaptation by controlling the forgetting sensory responses to odorants such as diacetyl and isoamyl alcohol. May play a role in regulating daf-7 expression in ASI neurons in response to bacterial small RNAs. In ASI neurons, promotes dauer formation in response to pheromones such as the ascarosides ascr#2 and ascr#3. The protein is Macoilin of Caenorhabditis elegans.